A 206-amino-acid polypeptide reads, in one-letter code: Large ribosomal subunit protein uL4 (206 aa).

Positions 42 to 94 (RRQQGSHKAQGRGDVSRTGSKMYKQKGTGRARHHSARAPQFRGGGQAHGPVVR) are disordered. The segment covering 64 to 77 (YKQKGTGRARHHSA) has biased composition (basic residues).

This sequence belongs to the universal ribosomal protein uL4 family. As to quaternary structure, part of the 50S ribosomal subunit.

One of the primary rRNA binding proteins, this protein initially binds near the 5'-end of the 23S rRNA. It is important during the early stages of 50S assembly. It makes multiple contacts with different domains of the 23S rRNA in the assembled 50S subunit and ribosome. Functionally, forms part of the polypeptide exit tunnel. This is Large ribosomal subunit protein uL4 from Brucella abortus biovar 1 (strain 9-941).